Here is a 533-residue protein sequence, read N- to C-terminus: Portal protein B (533 aa).

Belongs to the siphoviridae portal protein family. As to quaternary structure, homododecamer. Interacts with the terminase complex composed of two small and one large terminase subunits. In terms of processing, proteolytically cleaved by the viral protease during capsid maturation.

It localises to the virion. Its function is as follows. Forms the portal vertex of the capsid. This portal plays critical roles in head assembly, genome packaging, neck/tail attachment, and genome ejection. The portal protein multimerizes as a single ring-shaped homododecamer arranged around a central channel. Binds to the terminase subunits to form the packaging machine. This chain is Portal protein B, found in Escherichia phage lambda (Bacteriophage lambda).